Consider the following 315-residue polypeptide: Type II methyltransferase M.Bsp6I (315 aa).

Residues 2–315 (LQIASLFAGV…IAENIYKSML (314 aa)) form the SAM-dependent MTase C5-type domain. Residue Cys73 is part of the active site.

The protein belongs to the class I-like SAM-binding methyltransferase superfamily. C5-methyltransferase family.

It catalyses the reaction a 2'-deoxycytidine in DNA + S-adenosyl-L-methionine = a 5-methyl-2'-deoxycytidine in DNA + S-adenosyl-L-homocysteine + H(+). A methylase that recognizes the double-stranded sequence 5'-GCNGC-3', methylates C-? on both strands, and protects the DNA from cleavage by the Bsp6I endonuclease. The sequence is that of Type II methyltransferase M.Bsp6I from Bacillus sp. (strain RFL6).